Reading from the N-terminus, the 380-residue chain is O-methyltransferase ucdC (380 aa).

Residues Gly222–Gly223, Asp247, and Arg283 contribute to the S-adenosyl-L-methionine site. The active-site Proton acceptor is the His287.

It belongs to the class I-like SAM-binding methyltransferase superfamily. Cation-independent O-methyltransferase family. COMT subfamily.

The protein operates within secondary metabolite biosynthesis. Functionally, nonribosomal peptide synthetase that mediates the biosynthesis of usterphenyllins and uscandidusins, p-terphenyl derivatives. Within the pathway, ucdC catalyzes O-methylation of the terphenyl triol intermediate produced by ucdB to yield terphenyllin carrying two methoxy moieties at C-9 and C-12. The pathway begin with the biosynthesis of 4-hydroxyphenylpyruvate (HPPA) from L-tyrosine, possibly by the aminotransferase ucdG. The nonribosomal peptide synthetase ucdA then condenses two HPPA units to produce atromentin. The key step in this pathway is the reduction and dehydration of atromentin to form a terphenyl triol intermediate, performed by the NAD-dependent dehydrogenase ucdB. Further O-methylation by the methyltransferase ucdC forms terphenyllin carrying two methoxy moieties at C-9 and C-12, and subsequent dihydroxylation at C-3 of ring A and C-15 of ring C by the flavin-dependent oxygenase ucdD leads to 3,15-dihydroxyterphenyllin. Prenylation by ucdE at position C-5 of ring A forms usterphenyllin B, and is followed by a second prenylation at position C-14 of ring C to form usterphenyllin A. The following furan ring formation that leads to uscandidusins A and B was proven to be an unexpected spontaneous non-enzymatic reaction. The polypeptide is O-methyltransferase ucdC (Aspergillus ustus).